A 258-amino-acid chain; its full sequence is Deoxyribose-phosphate aldolase (258 aa).

Residue Asp101 is the Proton donor/acceptor of the active site. Lys166 serves as the catalytic Schiff-base intermediate with acetaldehyde. Lys200 serves as the catalytic Proton donor/acceptor.

This sequence belongs to the DeoC/FbaB aldolase family. DeoC type 2 subfamily.

The protein localises to the cytoplasm. The catalysed reaction is 2-deoxy-D-ribose 5-phosphate = D-glyceraldehyde 3-phosphate + acetaldehyde. Its pathway is carbohydrate degradation; 2-deoxy-D-ribose 1-phosphate degradation; D-glyceraldehyde 3-phosphate and acetaldehyde from 2-deoxy-alpha-D-ribose 1-phosphate: step 2/2. In terms of biological role, catalyzes a reversible aldol reaction between acetaldehyde and D-glyceraldehyde 3-phosphate to generate 2-deoxy-D-ribose 5-phosphate. The polypeptide is Deoxyribose-phosphate aldolase (Haemophilus ducreyi (strain 35000HP / ATCC 700724)).